Consider the following 271-residue polypeptide: 2-aminophenol 1,6-dioxygenase alpha subunit (271 aa).

The protein belongs to the LigB/MhpB extradiol dioxygenase family. Heterotetramer of 2 alpha and 2 beta subunits.

In terms of biological role, component of the 2-aminophenol 1,6-dioxygenase complex that catalyzes the ring fission of 2-aminophenol to produce 2-aminomuconic 6-semialdehyde. AmnA seems to have a role in the stability of the complex. This Pseudomonas sp protein is 2-aminophenol 1,6-dioxygenase alpha subunit (amnA).